The chain runs to 558 residues: CTP synthase (558 aa).

The segment at 1-270 (MTKYVFVTGG…DDLICRELDL (270 aa)) is amidoligase domain. Ser-13 contacts CTP. Ser-13 provides a ligand contact to UTP. ATP contacts are provided by residues 14 to 19 (SLGKGI) and Asp-71. Mg(2+) is bound by residues Asp-71 and Glu-144. CTP is bound by residues 151–153 (DIE), 191–196 (KTKPTQ), and Lys-227. UTP contacts are provided by residues 191-196 (KTKPTQ) and Lys-227. In terms of domain architecture, Glutamine amidotransferase type-1 spans 295 to 547 (TIGMVGKYVE…ISAALEHQKK (253 aa)). Residue Gly-356 participates in L-glutamine binding. The active-site Nucleophile; for glutamine hydrolysis is the Cys-383. L-glutamine is bound by residues 384–387 (LGMQ), Glu-407, and Arg-473. Residues His-520 and Glu-522 contribute to the active site.

It belongs to the CTP synthase family. In terms of assembly, homotetramer.

The enzyme catalyses UTP + L-glutamine + ATP + H2O = CTP + L-glutamate + ADP + phosphate + 2 H(+). It catalyses the reaction L-glutamine + H2O = L-glutamate + NH4(+). It carries out the reaction UTP + NH4(+) + ATP = CTP + ADP + phosphate + 2 H(+). It functions in the pathway pyrimidine metabolism; CTP biosynthesis via de novo pathway; CTP from UDP: step 2/2. Allosterically activated by GTP, when glutamine is the substrate; GTP has no effect on the reaction when ammonia is the substrate. The allosteric effector GTP functions by stabilizing the protein conformation that binds the tetrahedral intermediate(s) formed during glutamine hydrolysis. Inhibited by the product CTP, via allosteric rather than competitive inhibition. Catalyzes the ATP-dependent amination of UTP to CTP with either L-glutamine or ammonia as the source of nitrogen. Regulates intracellular CTP levels through interactions with the four ribonucleotide triphosphates. This is CTP synthase from Polynucleobacter necessarius subsp. necessarius (strain STIR1).